A 227-amino-acid chain; its full sequence is Thymidine kinase (227 aa).

ATP contacts are provided by residues 15–22 (GSMFSGKT) and 87–90 (DEAQ). Catalysis depends on E88, which acts as the Proton acceptor. 4 residues coordinate Zn(2+): C144, C147, C176, and C179. A disordered region spans residues 198 to 227 (RAVATDDADASTNEADPEAADAASADGTAA). The span at 217–227 (ADAASADGTAA) shows a compositional bias: low complexity.

This sequence belongs to the thymidine kinase family. As to quaternary structure, homotetramer.

It localises to the cytoplasm. The catalysed reaction is thymidine + ATP = dTMP + ADP + H(+). In Salinibacter ruber (strain DSM 13855 / M31), this protein is Thymidine kinase.